The sequence spans 428 residues: MTAAKPNPYAAKPGDYLSNVNNFQLIDSTLREGEQFANAFFDTEKKIEIARALDDFGVDYIELTSPVASEQSRKDCEAICKLGLKAKILTHIRCHMDDAKVAVETGVDGVDVVIGTSKFLRQYSHGKDMNYIAKSAVEVIEFVKSKGIEIRFSSEDSFRSDLVDLLNIYKTVDKIGVNRVGIADTVGCANPRQVYELIRTLKSVVSCDIECHFHNDTGCAIANAYTALEGGARLIDVSVLGIGERNGITPLGGLMARMIVAAPDYVKSKYKLHKIRDIENLVADAVEVNIPFNNPITGFCAFTHKAGIHAKAILANPSTYEILDPHDFGMKRYIHFANRLTGWNAIKARVDQLNLNLTDDQIKEVTAKIKKLGDVRSLNIDDVDSIIKNFHAEVSTPQVLSAKKNKKNDSDVPELATIPAAKRTKPSA.

The Pyruvate carboxyltransferase domain occupies phenylalanine 23–arginine 276. Arginine 31 is a 2-oxoglutarate binding site. Mg(2+) is bound at residue glutamate 32. The 2-oxoglutarate site is built by histidine 91, arginine 151, and threonine 185. Residues histidine 212 and histidine 214 each coordinate Mg(2+). The active-site Proton acceptor is the histidine 309. Serine 385 carries the post-translational modification Phosphoserine. Threonine 396 is subject to Phosphothreonine. The interval valine 399–alanine 428 is disordered. Residues serine 401 and serine 410 each carry the phosphoserine modification.

This sequence belongs to the alpha-IPM synthase/homocitrate synthase family. Homocitrate synthase LYS20/LYS21 subfamily. The cofactor is Mg(2+). Mn(2+) serves as cofactor.

It localises to the cytoplasm. It catalyses the reaction acetyl-CoA + 2-oxoglutarate + H2O = (2R)-homocitrate + CoA + H(+). It participates in amino-acid biosynthesis; L-lysine biosynthesis via AAA pathway; L-alpha-aminoadipate from 2-oxoglutarate: step 1/5. Functionally, catalyzes the aldol-type condensation of 2-oxoglutarate with acetyl-CoA to yield homocitrate. Carries out the first step of the alpha-aminoadipate (AAA) lysine biosynthesis pathway. This chain is Homocitrate synthase, cytosolic isozyme (LYS20), found in Saccharomyces cerevisiae (strain ATCC 204508 / S288c) (Baker's yeast).